The following is a 1481-amino-acid chain: Chromosome partition protein MukB (1481 aa).

34-41 (GGNGAGKS) contacts ATP. 5 coiled-coil regions span residues 338 to 480 (SLVQ…QAYQ), 509 to 604 (QHLA…APVW), 780 to 805 (RAAR…ATLS), 835 to 1116 (EAEI…AKAG), and 1210 to 1265 (EAIE…LQAV). The flexible hinge stretch occupies residues 666–783 (PSGAEDSRMI…EVPLFGRAAR (118 aa)).

This sequence belongs to the SMC family. MukB subfamily. In terms of assembly, homodimerization via its hinge domain. Binds to DNA via its C-terminal region. Interacts, and probably forms a ternary complex, with MukE and MukF via its C-terminal region. The complex formation is stimulated by calcium or magnesium. Interacts with tubulin-related protein FtsZ.

The protein localises to the cytoplasm. Its subcellular location is the nucleoid. In terms of biological role, plays a central role in chromosome condensation, segregation and cell cycle progression. Functions as a homodimer, which is essential for chromosome partition. Involved in negative DNA supercoiling in vivo, and by this means organize and compact chromosomes. May achieve or facilitate chromosome segregation by condensation DNA from both sides of a centrally located replisome during cell division. This Yersinia enterocolitica serotype O:8 / biotype 1B (strain NCTC 13174 / 8081) protein is Chromosome partition protein MukB.